A 1052-amino-acid polypeptide reads, in one-letter code: Isoleucine--tRNA ligase (1052 aa).

The short motif at 58–68 is the 'HIGH' region element; that stretch reads PFANGLPHYGH. The 'KMSKS' region signature appears at 627–631; the sequence is KMSKS. Residue lysine 630 participates in ATP binding.

The protein belongs to the class-I aminoacyl-tRNA synthetase family. IleS type 2 subfamily. As to quaternary structure, monomer. It depends on Zn(2+) as a cofactor.

The protein localises to the cytoplasm. The catalysed reaction is tRNA(Ile) + L-isoleucine + ATP = L-isoleucyl-tRNA(Ile) + AMP + diphosphate. In terms of biological role, catalyzes the attachment of isoleucine to tRNA(Ile). As IleRS can inadvertently accommodate and process structurally similar amino acids such as valine, to avoid such errors it has two additional distinct tRNA(Ile)-dependent editing activities. One activity is designated as 'pretransfer' editing and involves the hydrolysis of activated Val-AMP. The other activity is designated 'posttransfer' editing and involves deacylation of mischarged Val-tRNA(Ile). The protein is Isoleucine--tRNA ligase of Corynebacterium diphtheriae (strain ATCC 700971 / NCTC 13129 / Biotype gravis).